A 72-amino-acid chain; its full sequence is Cytochrome b-c1 complex subunit 8 (72 aa).

Residues 2 to 41 (GKQPVKLKAVVYAISPFQQKIMPGLWKDLPGKIHHKVSEN) are Mitochondrial matrix-facing. Residues 42-59 (WISATLLLGPLVGTYSYV) traverse the membrane as a helical segment. The Mitochondrial intermembrane portion of the chain corresponds to 60–72 (QHFLEKEKLEHRY).

The protein belongs to the UQCRQ/QCR8 family. As to quaternary structure, component of the ubiquinol-cytochrome c oxidoreductase (cytochrome b-c1 complex, complex III, CIII), a multisubunit enzyme composed of 3 respiratory subunits cytochrome b, cytochrome c1 and Rieske protein, 2 core protein subunits, and additional low-molecular weight protein subunits. The complex exists as an obligatory dimer and forms supercomplexes (SCs) in the inner mitochondrial membrane with cytochrome c oxidase (complex IV, CIV).

It localises to the mitochondrion inner membrane. In terms of biological role, component of the ubiquinol-cytochrome c oxidoreductase, a multisubunit transmembrane complex that is part of the mitochondrial electron transport chain which drives oxidative phosphorylation. The respiratory chain contains 3 multisubunit complexes succinate dehydrogenase (complex II, CII), ubiquinol-cytochrome c oxidoreductase (cytochrome b-c1 complex, complex III, CIII) and cytochrome c oxidase (complex IV, CIV), that cooperate to transfer electrons derived from NADH and succinate to molecular oxygen, creating an electrochemical gradient over the inner membrane that drives transmembrane transport and the ATP synthase. The cytochrome b-c1 complex catalyzes electron transfer from ubiquinol to cytochrome c, linking this redox reaction to translocation of protons across the mitochondrial inner membrane, with protons being carried across the membrane as hydrogens on the quinol. In the process called Q cycle, 2 protons are consumed from the matrix, 4 protons are released into the intermembrane space and 2 electrons are passed to cytochrome c. This is Cytochrome b-c1 complex subunit 8 from Solanum tuberosum (Potato).